The sequence spans 97 residues: Large ribosomal subunit protein uL23 (97 aa).

It belongs to the universal ribosomal protein uL23 family. In terms of assembly, part of the 50S ribosomal subunit. Contacts protein L29, and trigger factor when it is bound to the ribosome.

One of the early assembly proteins it binds 23S rRNA. One of the proteins that surrounds the polypeptide exit tunnel on the outside of the ribosome. Forms the main docking site for trigger factor binding to the ribosome. This Chelativorans sp. (strain BNC1) protein is Large ribosomal subunit protein uL23.